Here is a 407-residue protein sequence, read N- to C-terminus: Putative nickel insertion protein (407 aa).

The protein belongs to the LarC family.

The polypeptide is Putative nickel insertion protein (Gloeothece citriformis (strain PCC 7424) (Cyanothece sp. (strain PCC 7424))).